Here is a 288-residue protein sequence, read N- to C-terminus: Tryptophan 2,3-dioxygenase (288 aa).

Substrate contacts are provided by residues 57 to 61 (FIIQH), Tyr-119, and Arg-123. Residue His-246 coordinates heme. Thr-260 is a binding site for substrate.

The protein belongs to the tryptophan 2,3-dioxygenase family. Homotetramer. Requires heme as cofactor.

It catalyses the reaction L-tryptophan + O2 = N-formyl-L-kynurenine. It functions in the pathway amino-acid degradation; L-tryptophan degradation via kynurenine pathway; L-kynurenine from L-tryptophan: step 1/2. Functionally, heme-dependent dioxygenase that catalyzes the oxidative cleavage of the L-tryptophan (L-Trp) pyrrole ring and converts L-tryptophan to N-formyl-L-kynurenine. Catalyzes the oxidative cleavage of the indole moiety. This is Tryptophan 2,3-dioxygenase from Pseudomonas aeruginosa (strain ATCC 15692 / DSM 22644 / CIP 104116 / JCM 14847 / LMG 12228 / 1C / PRS 101 / PAO1).